A 55-amino-acid chain; its full sequence is ATP synthase F(0) complex subunit 8 (55 aa).

Residues 10 to 30 (FPIMMLSWLIFSLIIQPKLLL) form a helical membrane-spanning segment. The segment at 35 to 55 (NPPSNKTTTTTRSNPWTWPWT) is disordered. Positions 37–55 (PSNKTTTTTRSNPWTWPWT) are enriched in low complexity.

It belongs to the ATPase protein 8 family. In terms of assembly, component of the ATP synthase complex composed at least of ATP5F1A/subunit alpha, ATP5F1B/subunit beta, ATP5MC1/subunit c (homooctomer), MT-ATP6/subunit a, MT-ATP8/subunit 8, ATP5ME/subunit e, ATP5MF/subunit f, ATP5MG/subunit g, ATP5MK/subunit k, ATP5MJ/subunit j, ATP5F1C/subunit gamma, ATP5F1D/subunit delta, ATP5F1E/subunit epsilon, ATP5PF/subunit F6, ATP5PB/subunit b, ATP5PD/subunit d, ATP5PO/subunit OSCP. ATP synthase complex consists of a soluble F(1) head domain (subunits alpha(3) and beta(3)) - the catalytic core - and a membrane F(0) domain - the membrane proton channel (subunits c, a, 8, e, f, g, k and j). These two domains are linked by a central stalk (subunits gamma, delta, and epsilon) rotating inside the F1 region and a stationary peripheral stalk (subunits F6, b, d, and OSCP).

The protein resides in the mitochondrion membrane. In terms of biological role, subunit 8, of the mitochondrial membrane ATP synthase complex (F(1)F(0) ATP synthase or Complex V) that produces ATP from ADP in the presence of a proton gradient across the membrane which is generated by electron transport complexes of the respiratory chain. ATP synthase complex consist of a soluble F(1) head domain - the catalytic core - and a membrane F(1) domain - the membrane proton channel. These two domains are linked by a central stalk rotating inside the F(1) region and a stationary peripheral stalk. During catalysis, ATP synthesis in the catalytic domain of F(1) is coupled via a rotary mechanism of the central stalk subunits to proton translocation. In vivo, can only synthesize ATP although its ATP hydrolase activity can be activated artificially in vitro. Part of the complex F(0) domain. The chain is ATP synthase F(0) complex subunit 8 from Opisthocomus hoazin (Hoatzin).